We begin with the raw amino-acid sequence, 352 residues long: MIPPCDPTILEHNPLFKRLHQHLTASLLNPDGSTRTTDAQPARREIIMELRGCRMRNAKKQIKKQMLRQLALDPDNELPDECREPLAIISLYLEASPNELDQIRDPRDGVDVDTLLASDFEKFYAKLPFIMPHFTRSLASALHDLRSLANAGNKAALSNTSTEGSRSRMQVRCRSKAARQDPLGPQLSERLQNLRHLQLSELAGGRTRMAGTAAEVLAMRAAILERTVTLLERTKHGAMARATKAKAEHLAAVARGLEGKLRVMRLDALAAIHTPEVNAALSHYFQHLRNARERLEERRRLVLDELKAYEDADSSTINGPAKPGPIVGFIRQYGNLIKQIEDIKSEIRRLQR.

Positions 285-352 (FQHLRNARER…IKSEIRRLQR (68 aa)) form a coiled coil.

This is an uncharacterized protein from Emericella nidulans (strain FGSC A4 / ATCC 38163 / CBS 112.46 / NRRL 194 / M139) (Aspergillus nidulans).